Reading from the N-terminus, the 605-residue chain is Elongation factor 4 (605 aa).

One can recognise a tr-type G domain in the interval 9-192; it reads GMIRNFCIIA…AIVQRIPAPA (184 aa). GTP is bound by residues 21 to 26 and 139 to 142; these read DHGKST and NKID.

It belongs to the TRAFAC class translation factor GTPase superfamily. Classic translation factor GTPase family. LepA subfamily.

It localises to the cell inner membrane. It catalyses the reaction GTP + H2O = GDP + phosphate + H(+). Functionally, required for accurate and efficient protein synthesis under certain stress conditions. May act as a fidelity factor of the translation reaction, by catalyzing a one-codon backward translocation of tRNAs on improperly translocated ribosomes. Back-translocation proceeds from a post-translocation (POST) complex to a pre-translocation (PRE) complex, thus giving elongation factor G a second chance to translocate the tRNAs correctly. Binds to ribosomes in a GTP-dependent manner. This is Elongation factor 4 from Chlorobaculum parvum (strain DSM 263 / NCIMB 8327) (Chlorobium vibrioforme subsp. thiosulfatophilum).